Consider the following 599-residue polypeptide: Elongation factor 4 (599 aa).

The tr-type G domain occupies 4 to 186 (KFIRNFSIIA…AIIKHVPPPL (183 aa)). Residues 16–21 (DHGKST) and 133–136 (NKID) each bind GTP.

Belongs to the TRAFAC class translation factor GTPase superfamily. Classic translation factor GTPase family. LepA subfamily.

It is found in the cell membrane. The enzyme catalyses GTP + H2O = GDP + phosphate + H(+). Functionally, required for accurate and efficient protein synthesis under certain stress conditions. May act as a fidelity factor of the translation reaction, by catalyzing a one-codon backward translocation of tRNAs on improperly translocated ribosomes. Back-translocation proceeds from a post-translocation (POST) complex to a pre-translocation (PRE) complex, thus giving elongation factor G a second chance to translocate the tRNAs correctly. Binds to ribosomes in a GTP-dependent manner. This Ureaplasma parvum serovar 3 (strain ATCC 27815 / 27 / NCTC 11736) protein is Elongation factor 4.